We begin with the raw amino-acid sequence, 201 residues long: Dephospho-CoA kinase (201 aa).

Residues 4-201 (SVGLTGNIAS…KYLREAKIKQ (198 aa)) enclose the DPCK domain. 12-17 (ASGKST) is a binding site for ATP.

The protein belongs to the CoaE family.

The protein resides in the cytoplasm. The catalysed reaction is 3'-dephospho-CoA + ATP = ADP + CoA + H(+). Its pathway is cofactor biosynthesis; coenzyme A biosynthesis; CoA from (R)-pantothenate: step 5/5. Functionally, catalyzes the phosphorylation of the 3'-hydroxyl group of dephosphocoenzyme A to form coenzyme A. This chain is Dephospho-CoA kinase, found in Legionella pneumophila (strain Lens).